The following is a 286-amino-acid chain: Secretory carrier-associated membrane protein 2 (286 aa).

Basic and acidic residues-rich tracts occupy residues 1–10 and 54–63; these read MAGRYDRNPF and STKDMKKKEK. The disordered stretch occupies residues 1 to 63; that stretch reads MAGRYDRNPF…STKDMKKKEK (63 aa). The Cytoplasmic portion of the chain corresponds to 1–126; the sequence is MAGRYDRNPF…LQRMQYLAFS (126 aa). Positions 52-89 form a coiled coil; the sequence is LDSTKDMKKKEKELQAKEAELNKRESELRRREEAASRA. The next 4 membrane-spanning stretches (helical) occupy residues 127 to 147, 152 to 172, 189 to 209, and 237 to 257; these read SLLG…AAWI, VMIW…AYVL, FGWF…SAVA, and IFYF…VVVI. Residues 258–286 lie on the Cytoplasmic side of the membrane; it reads QQVYMYFRGSGKAAEMKREAARGAMRSAF.

It belongs to the SCAMP family.

The protein localises to the cell membrane. It is found in the cytoplasmic vesicle. Its subcellular location is the secretory vesicle membrane. Probably involved in membrane trafficking. This is Secretory carrier-associated membrane protein 2 (SCAMP2) from Oryza sativa subsp. japonica (Rice).